A 412-amino-acid chain; its full sequence is Tyrosine--tRNA ligase (412 aa).

Tyrosine 31 serves as a coordination point for L-tyrosine. The 'HIGH' region signature appears at proline 36 to histidine 45. The L-tyrosine site is built by tyrosine 162 and glutamine 166. Residues lysine 222–threonine 226 carry the 'KMSKS' region motif. Lysine 225 contacts ATP. Positions lysine 345–isoleucine 412 constitute an S4 RNA-binding domain.

Belongs to the class-I aminoacyl-tRNA synthetase family. TyrS type 1 subfamily. In terms of assembly, homodimer.

It is found in the cytoplasm. It carries out the reaction tRNA(Tyr) + L-tyrosine + ATP = L-tyrosyl-tRNA(Tyr) + AMP + diphosphate + H(+). Its function is as follows. Catalyzes the attachment of tyrosine to tRNA(Tyr) in a two-step reaction: tyrosine is first activated by ATP to form Tyr-AMP and then transferred to the acceptor end of tRNA(Tyr). The chain is Tyrosine--tRNA ligase from Chlamydia caviae (strain ATCC VR-813 / DSM 19441 / 03DC25 / GPIC) (Chlamydophila caviae).